Consider the following 298-residue polypeptide: Osmoprotective compounds uptake permease protein GgtD (298 aa).

7 helical membrane passes run 26 to 46 (IHIA…GLFI), 97 to 117 (IAVP…YAFA), 126 to 146 (LLFI…LIPV), 158 to 178 (TFLG…IYLL), 207 to 227 (LIVP…FLWV), 231 to 251 (LLVA…TIQL), and 263 to 283 (YLLT…FFGL). Positions 91–283 (FLNSLTIAVP…IVPLMVFFGL (193 aa)) constitute an ABC transmembrane type-1 domain.

The protein belongs to the binding-protein-dependent transport system permease family. As to quaternary structure, the complex is composed of two ATP-binding proteins (GgtA), two transmembrane proteins (GgtC and GgtD) and a solute-binding protein (GgtB).

Its subcellular location is the cell membrane. Its function is as follows. Part of the ABC transporter complex GgtABCD involved in the uptake of the osmoprotective compounds glucosylglycerol (GG), sucrose and trehalose. Responsible for the translocation of the substrate across the membrane. The protein is Osmoprotective compounds uptake permease protein GgtD of Synechocystis sp. (strain ATCC 27184 / PCC 6803 / Kazusa).